The following is a 581-amino-acid chain: MKSHTQSLLAESLNALKQQGVVPADFEARIQVDRTKDKSHGDFATNLAMMLTKAARKNPREIAQLIIDNLPQSSHVEKVEIAGPGFINFFIDDNALANQLMDALNSDHLGVTLPESQTVVVDYSSPNLAKEMHVGHLRSTIIGDSVVRSLEFMGHNVIRQNHVGDWGTQFGMLLAYMEELRAANGEQAQIELSDLENFYRAAKVRFDESEDFANRARKLVVALQSGDEYCNKLWREFNDISLSHCHEIYERLGVSLTRQDVRGESSYNDDLEQVVADLDSQGLLSESNGAKVVFQEEFKNKEGEPLPVIIQKADGGYLYATSDMAAMRYRSNVLKADRALYFVDLRQALHFQQVFKLAKTAKFVREEMSFEHMGFGTMNGEDGRPFKTRSGGVVKLIDLLKEADTRALELVRSKNPDMDEAELAEIARVVGIASVKYADLSKNRTSDYIFSFEQMLSFEGNTAPYLLYAYTRVAGIFKRAQDVDLSDAKIVLEHEKEKDLGTKLAQFGEVMNRVVNKGQPHALCAYLFELAGAFSSFYEACPVLAADTEAQKKSRLLLAQLTAKTLKQGLNLLGLETLERM.

Residues proline 126–histidine 136 carry the 'HIGH' region motif.

It belongs to the class-I aminoacyl-tRNA synthetase family. Monomer.

It is found in the cytoplasm. It carries out the reaction tRNA(Arg) + L-arginine + ATP = L-arginyl-tRNA(Arg) + AMP + diphosphate. The sequence is that of Arginine--tRNA ligase from Shewanella piezotolerans (strain WP3 / JCM 13877).